The sequence spans 468 residues: Argininosuccinate lyase (468 aa).

The protein belongs to the lyase 1 family. Argininosuccinate lyase subfamily.

It is found in the cytoplasm. It catalyses the reaction 2-(N(omega)-L-arginino)succinate = fumarate + L-arginine. Its pathway is amino-acid biosynthesis; L-arginine biosynthesis; L-arginine from L-ornithine and carbamoyl phosphate: step 3/3. This Alkalilimnicola ehrlichii (strain ATCC BAA-1101 / DSM 17681 / MLHE-1) protein is Argininosuccinate lyase.